Reading from the N-terminus, the 540-residue chain is Glucose-6-phosphate isomerase (540 aa).

The Proton donor role is filled by Glu-350. Residues His-381 and Lys-503 contribute to the active site.

The protein belongs to the GPI family.

Its subcellular location is the cytoplasm. The enzyme catalyses alpha-D-glucose 6-phosphate = beta-D-fructose 6-phosphate. The protein operates within carbohydrate biosynthesis; gluconeogenesis. It functions in the pathway carbohydrate degradation; glycolysis; D-glyceraldehyde 3-phosphate and glycerone phosphate from D-glucose: step 2/4. Catalyzes the reversible isomerization of glucose-6-phosphate to fructose-6-phosphate. The chain is Glucose-6-phosphate isomerase from Burkholderia mallei (strain NCTC 10247).